Here is a 426-residue protein sequence, read N- to C-terminus: MFIISETQRTFASFFIFGLLNNILYVIILSAAIDLVGPSTPKAIVLLADIIPSFSFKVAAPFFIHAVPYIIRLWTLVALSATGMVLISLSPTNVISWKILGITLASLSSGLGEVSFLQLTHYYEENSAIGGFSSGTGGAGLFGSFLFMVLTNVMGFPVWVVLLICAVFPSGFIITYFNLLPLPMHEYQVILQQQQEREEEQEEEEYQQQLQDEARSQNIESIREVKYSVNYISKHVQNTIHKITPLILPYMLPLTTVYISEYVINQGISPTLLFPLKEVPRWLISSYRDIYVVYGFLYQLGVFISRSSVTMGIRIKRLYLLSVLQFINVMITLYQSIYDLPFHSIWWLFLLIFYEGLLGGASYVNTFKSVSEQVSRTKREFSMGCVSISDSLGIVTAGCINWWLELKLCHLQVARGRDWCLKGGSL.

Residues 1-32 (MFIISETQRTFASFFIFGLLNNILYVIILSAA) form the signal peptide. 10 consecutive transmembrane segments (helical) span residues 44 to 64 (IVLL…PFFI), 67 to 87 (VPYI…MVLI), 99 to 119 (ILGI…FLQL), 129 to 149 (IGGF…LFMV), 154 to 174 (MGFP…GFII), 243 to 263 (ITPL…SEYV), 290 to 310 (IYVV…SSVT), 318 to 338 (LYLL…QSIY), 340 to 360 (LPFH…LLGG), and 384 to 404 (GCVS…NWWL).

It belongs to the battenin family.

It is found in the vacuole membrane. Functionally, involved in vacuolar transport and vacuole pH homeostasis. Also required for cytokinesis. The chain is Protein BTN1 (BTN1) from Candida albicans (strain SC5314 / ATCC MYA-2876) (Yeast).